The following is a 528-amino-acid chain: Na(+)/H(+) antiporter NhaB (528 aa).

Helical transmembrane passes span Phe-28–Val-50, Pro-67–Leu-87, Leu-98–Phe-118, Ala-140–Val-160, Phe-240–Phe-260, Ala-305–Ile-325, Glu-350–Ile-370, Leu-391–Gly-411, Ala-449–Ile-469, and Met-476–Glu-496.

The protein belongs to the NhaB Na(+)/H(+) (TC 2.A.34) antiporter family.

It localises to the cell inner membrane. The enzyme catalyses 2 Na(+)(in) + 3 H(+)(out) = 2 Na(+)(out) + 3 H(+)(in). Its function is as follows. Na(+)/H(+) antiporter that extrudes sodium in exchange for external protons. The protein is Na(+)/H(+) antiporter NhaB of Shewanella frigidimarina (strain NCIMB 400).